The chain runs to 327 residues: Microtubule-associated protein RP/EB family member 2 (327 aa).

Residues 1 to 21 form a disordered region; it reads MPGPTQTLSPNGENNNDIIQD. Ser-9 is subject to Phosphoserine. One can recognise a Calponin-homology (CH) domain in the interval 57 to 159; sequence TMSRHDIIAW…FIQWFKKFYD (103 aa). At Tyr-167 the chain carries Phosphotyrosine. Disordered stretches follow at residues 171–240 and 299–327; these read EARQ…DKDL and ASEE…QEEY. A DCTN1-binding region spans residues 187-327; it reads QIFNLPKKSH…EQQPPQQEEY (141 aa). Residues 200-234 are compositionally biased toward low complexity; it reads SPTAGAAKSSPAAKPGSTPSRPSSAKRASSSGSAS. Ser-219 carries the post-translational modification Phosphoserine. The 71-residue stretch at 236 to 306 folds into the EB1 C-terminal domain; it reads SDKDLETQVI…LYASEEHEGH (71 aa). An APC-binding region spans residues 259–302; it reads EGVEKERDFYFGKLREIELLCQEHGQENDDLVQRLMDVLYASEE. Positions 300-317 are enriched in basic and acidic residues; it reads SEEHEGHTEEPEAEEQAH. The segment covering 318–327 has biased composition (low complexity); sequence EQQPPQQEEY.

Belongs to the MAPRE family. Interacts with DCTN1. Interacts with APC (via C-terminal). Interacts with monomeric and polymerized tubulin. Interacts with SLAIN1. Interacts (via the N-terminal region) with BAG1.

The protein resides in the cytoplasm. The protein localises to the cytoskeleton. In terms of biological role, may be involved in microtubule polymerization, and spindle function by stabilizing microtubules and anchoring them at centrosomes. May play a role in cell migration. This is Microtubule-associated protein RP/EB family member 2 (MAPRE2) from Pongo abelii (Sumatran orangutan).